The following is a 54-amino-acid chain: Large ribosomal subunit protein bL33A (54 aa).

It belongs to the bacterial ribosomal protein bL33 family.

In Mesoplasma florum (strain ATCC 33453 / NBRC 100688 / NCTC 11704 / L1) (Acholeplasma florum), this protein is Large ribosomal subunit protein bL33A.